A 290-amino-acid polypeptide reads, in one-letter code: Succinate dehydrogenase [ubiquinone] iron-sulfur subunit, mitochondrial (290 aa).

The N-terminal 38 residues, 1 to 38, are a transit peptide targeting the mitochondrion; the sequence is MAAAVVGVSLRRGVPARFLRAGLRPVRGLEAVHGICRG. Residues 50 to 143 form the 2Fe-2S ferredoxin-type domain; it reads KKFSIYRWDP…TTKIYPLPHM (94 aa). Cys-103, Cys-108, Cys-111, and Cys-123 together coordinate [2Fe-2S] cluster. The 4Fe-4S ferredoxin-type domain occupies 186–216; the sequence is DRQKLDGLYECILCACCSTSCPSYWWNGDKY. Positions 196, 199, and 202 each coordinate [4Fe-4S] cluster. Cys-206 is a [3Fe-4S] cluster binding site. Trp-211 serves as a coordination point for a ubiquinone. Residues Cys-253 and Cys-259 each contribute to the [3Fe-4S] cluster site. Cys-263 serves as a coordination point for [4Fe-4S] cluster.

It belongs to the succinate dehydrogenase/fumarate reductase iron-sulfur protein family. As to quaternary structure, component of complex II composed of four subunits: the flavoprotein (FP) SDHA, iron-sulfur protein (IP) SDHB, and a cytochrome b560 composed of SDHC and SDHD. [2Fe-2S] cluster is required as a cofactor. The cofactor is [3Fe-4S] cluster. Requires [4Fe-4S] cluster as cofactor.

It localises to the mitochondrion inner membrane. It catalyses the reaction a quinone + succinate = fumarate + a quinol. The catalysed reaction is (R)-malate + a quinone = enol-oxaloacetate + a quinol. The enzyme catalyses (S)-malate + a quinone = enol-oxaloacetate + a quinol. The protein operates within carbohydrate metabolism; tricarboxylic acid cycle; fumarate from succinate (eukaryal route): step 1/1. With respect to regulation, enol-oxaloacetate inhibits the succinate dehydrogenase activity. Functionally, iron-sulfur protein (IP) subunit of the succinate dehydrogenase complex (mitochondrial respiratory chain complex II), responsible for transferring electrons from succinate to ubiquinone (coenzyme Q). SDH also oxidizes malate to the non-canonical enol form of oxaloacetate, enol-oxaloacetate. Enol-oxaloacetate, which is a potent inhibitor of the succinate dehydrogenase activity, is further isomerized into keto-oxaloacetate. The sequence is that of Succinate dehydrogenase [ubiquinone] iron-sulfur subunit, mitochondrial (SDHB) from Gallus gallus (Chicken).